Reading from the N-terminus, the 122-residue chain is Sterile alpha motif domain-containing protein 13 (122 aa).

Residues 51–119 (WAVMDVVNYF…KPLQTKHLKN (69 aa)) form the SAM domain.

The sequence is that of Sterile alpha motif domain-containing protein 13 (SAMD13) from Homo sapiens (Human).